A 76-amino-acid polypeptide reads, in one-letter code: Small ribosomal subunit protein bS18 (76 aa).

The protein belongs to the bacterial ribosomal protein bS18 family. Part of the 30S ribosomal subunit. Forms a tight heterodimer with protein bS6.

Functionally, binds as a heterodimer with protein bS6 to the central domain of the 16S rRNA, where it helps stabilize the platform of the 30S subunit. The sequence is that of Small ribosomal subunit protein bS18 from Neisseria gonorrhoeae (strain ATCC 700825 / FA 1090).